We begin with the raw amino-acid sequence, 487 residues long: mRNA cleavage and polyadenylation factor CLP1 (487 aa).

Residues Glu19, Lys59, and 134–139 (NSGKTT) contribute to the ATP site.

This sequence belongs to the Clp1 family. Clp1 subfamily. As to quaternary structure, component of a pre-mRNA cleavage factor complex. Interacts directly with PCF11.

The protein localises to the nucleus. In terms of biological role, required for endonucleolytic cleavage during polyadenylation-dependent pre-mRNA 3'-end formation. The chain is mRNA cleavage and polyadenylation factor CLP1 from Laccaria bicolor (strain S238N-H82 / ATCC MYA-4686) (Bicoloured deceiver).